The chain runs to 183 residues: MTTSSPSQVRQNYHQDSEAAINRQINLELYASYVYLSMSYYFDRDDVALKNFAKYFLHQSHEEREHAEKLMKLQNQRGGRIFLQDIKKPDRDDWESGLNAMECALHLEKNVNQSLLELHKLATDKNDPHLCDFIETHYLDEQVKAIKQLGDHVTNLRKMGAPDSGMAEYLFDKHTLGDSDNES.

Met1 carries the post-translational modification N-acetylmethionine. Thr2 is subject to N-acetylthreonine; in Ferritin heavy chain, N-terminally processed. The region spanning 11-160 (QNYHQDSEAA…DHVTNLRKMG (150 aa)) is the Ferritin-like diiron domain. Fe cation contacts are provided by Glu28, Glu63, His66, Glu108, and Gln142. A phosphoserine mark is found at Ser179 and Ser183.

It belongs to the ferritin family. In terms of assembly, oligomer of 24 subunits. There are two types of subunits: L (light) chain and H (heavy) chain. The major chain can be light or heavy, depending on the species and tissue type. The functional molecule forms a roughly spherical shell with a diameter of 12 nm and contains a central cavity into which the insoluble mineral iron core is deposited. Interacts with NCOA4; NCOA4 promotes targeting of the iron-binding ferritin complex to autolysosomes following starvation or iron depletion. As to expression, ubiquitous.

The protein resides in the cytoplasm. The protein localises to the lysosome. Its subcellular location is the cytoplasmic vesicle. It localises to the autophagosome. It catalyses the reaction 4 Fe(2+) + O2 + 4 H(+) = 4 Fe(3+) + 2 H2O. Stores iron in a soluble, non-toxic, readily available form. Important for iron homeostasis. Has ferroxidase activity. Iron is taken up in the ferrous form and deposited as ferric hydroxides after oxidation. Also plays a role in delivery of iron to cells. Mediates iron uptake in capsule cells of the developing kidney. Delivery to lysosomes is mediated by the cargo receptor NCOA4 for autophagic degradation and release of iron. The sequence is that of Ferritin heavy chain (FTH1) from Trichosurus vulpecula (Brush-tailed possum).